A 161-amino-acid chain; its full sequence is 6,7-dimethyl-8-ribityllumazine synthase (161 aa).

5-amino-6-(D-ribitylamino)uracil is bound by residues Trp26, 58-60, and 81-83; these read SFE and VVI. Residue 86 to 87 participates in (2S)-2-hydroxy-3-oxobutyl phosphate binding; the sequence is GT. His89 serves as the catalytic Proton donor. Phe114 contacts 5-amino-6-(D-ribitylamino)uracil. A (2S)-2-hydroxy-3-oxobutyl phosphate-binding site is contributed by Arg128.

Belongs to the DMRL synthase family.

It carries out the reaction (2S)-2-hydroxy-3-oxobutyl phosphate + 5-amino-6-(D-ribitylamino)uracil = 6,7-dimethyl-8-(1-D-ribityl)lumazine + phosphate + 2 H2O + H(+). The protein operates within cofactor biosynthesis; riboflavin biosynthesis; riboflavin from 2-hydroxy-3-oxobutyl phosphate and 5-amino-6-(D-ribitylamino)uracil: step 1/2. Its function is as follows. Catalyzes the formation of 6,7-dimethyl-8-ribityllumazine by condensation of 5-amino-6-(D-ribitylamino)uracil with 3,4-dihydroxy-2-butanone 4-phosphate. This is the penultimate step in the biosynthesis of riboflavin. In Streptomyces avermitilis (strain ATCC 31267 / DSM 46492 / JCM 5070 / NBRC 14893 / NCIMB 12804 / NRRL 8165 / MA-4680), this protein is 6,7-dimethyl-8-ribityllumazine synthase.